We begin with the raw amino-acid sequence, 156 residues long: Small ribosomal subunit protein uS7 (156 aa).

This sequence belongs to the universal ribosomal protein uS7 family. Part of the 30S ribosomal subunit. Contacts proteins S9 and S11.

One of the primary rRNA binding proteins, it binds directly to 16S rRNA where it nucleates assembly of the head domain of the 30S subunit. Is located at the subunit interface close to the decoding center, probably blocks exit of the E-site tRNA. The chain is Small ribosomal subunit protein uS7 from Oleidesulfovibrio alaskensis (strain ATCC BAA-1058 / DSM 17464 / G20) (Desulfovibrio alaskensis).